The chain runs to 152 residues: Transcriptional regulator MraZ (152 aa).

2 SpoVT-AbrB domains span residues 5–52 (VTSI…PLHE) and 81–124 (ATEC…QDKQ).

It belongs to the MraZ family. As to quaternary structure, forms oligomers.

It localises to the cytoplasm. It is found in the nucleoid. The chain is Transcriptional regulator MraZ from Actinobacillus pleuropneumoniae serotype 5b (strain L20).